The following is a 90-amino-acid chain: Small ribosomal subunit protein uS15c (90 aa).

It belongs to the universal ribosomal protein uS15 family. Part of the 30S ribosomal subunit.

The protein resides in the plastid. It is found in the chloroplast. The sequence is that of Small ribosomal subunit protein uS15c (rps15) from Populus alba (White poplar).